Consider the following 616-residue polypeptide: Proline--tRNA ligase (616 aa).

Belongs to the class-II aminoacyl-tRNA synthetase family. ProS type 1 subfamily. As to quaternary structure, homodimer.

Its subcellular location is the cytoplasm. It catalyses the reaction tRNA(Pro) + L-proline + ATP = L-prolyl-tRNA(Pro) + AMP + diphosphate. Its function is as follows. Catalyzes the attachment of proline to tRNA(Pro) in a two-step reaction: proline is first activated by ATP to form Pro-AMP and then transferred to the acceptor end of tRNA(Pro). As ProRS can inadvertently accommodate and process non-cognate amino acids such as alanine and cysteine, to avoid such errors it has two additional distinct editing activities against alanine. One activity is designated as 'pretransfer' editing and involves the tRNA(Pro)-independent hydrolysis of activated Ala-AMP. The other activity is designated 'posttransfer' editing and involves deacylation of mischarged Ala-tRNA(Pro). The misacylated Cys-tRNA(Pro) is not edited by ProRS. This chain is Proline--tRNA ligase, found in Lactococcus lactis subsp. cremoris (strain SK11).